Here is a 179-residue protein sequence, read N- to C-terminus: Large ribosomal subunit protein uL5 (179 aa).

Belongs to the universal ribosomal protein uL5 family. Part of the 50S ribosomal subunit; part of the 5S rRNA/L5/L18/L25 subcomplex. Contacts the 5S rRNA and the P site tRNA. Forms a bridge to the 30S subunit in the 70S ribosome.

Functionally, this is one of the proteins that bind and probably mediate the attachment of the 5S RNA into the large ribosomal subunit, where it forms part of the central protuberance. In the 70S ribosome it contacts protein S13 of the 30S subunit (bridge B1b), connecting the 2 subunits; this bridge is implicated in subunit movement. Contacts the P site tRNA; the 5S rRNA and some of its associated proteins might help stabilize positioning of ribosome-bound tRNAs. The protein is Large ribosomal subunit protein uL5 of Desulfitobacterium hafniense (strain Y51).